Here is a 37-residue protein sequence, read N- to C-terminus: Potassium channel toxin alpha-KTx 1.11 (37 aa).

Cystine bridges form between Cys7–Cys28, Cys13–Cys33, and Cys17–Cys35.

This sequence belongs to the short scorpion toxin superfamily. Potassium channel inhibitor family. Alpha-KTx 01 subfamily. In terms of tissue distribution, expressed by the venom gland.

The protein localises to the secreted. In terms of biological role, reversibly blocks the high conductance calcium-activated potassium channels composed of only alpha subunits (KCa1.1/KCNMA1). Unreversibly blocks the high conductance calcium-activated potassium channels composed of alpha and beta1 subunits (KCNMA1 and KCNMB1). Unreversibly and weakly blocks the high conductance calcium-activated potassium channels composed of alpha and beta4 (KCNMA1 and KCNMB4). This chain is Potassium channel toxin alpha-KTx 1.11, found in Centruroides noxius (Mexican scorpion).